Consider the following 430-residue polypeptide: Enolase (430 aa).

Glutamine 163 contacts (2R)-2-phosphoglycerate. Glutamate 205 (proton donor) is an active-site residue. Residues aspartate 242, glutamate 288, and aspartate 315 each coordinate Mg(2+). Lysine 340, arginine 369, serine 370, and lysine 391 together coordinate (2R)-2-phosphoglycerate. Catalysis depends on lysine 340, which acts as the Proton acceptor.

Belongs to the enolase family. Mg(2+) serves as cofactor.

The protein resides in the cytoplasm. It localises to the secreted. The protein localises to the cell surface. It catalyses the reaction (2R)-2-phosphoglycerate = phosphoenolpyruvate + H2O. Its pathway is carbohydrate degradation; glycolysis; pyruvate from D-glyceraldehyde 3-phosphate: step 4/5. Catalyzes the reversible conversion of 2-phosphoglycerate (2-PG) into phosphoenolpyruvate (PEP). It is essential for the degradation of carbohydrates via glycolysis. The protein is Enolase of Phytoplasma australiense.